The following is a 273-amino-acid chain: 6-carboxyhexanoate--CoA ligase (273 aa).

Belongs to the BioW family. In terms of assembly, homodimer. Mg(2+) is required as a cofactor.

The catalysed reaction is heptanedioate + ATP + CoA = 6-carboxyhexanoyl-CoA + AMP + diphosphate. The protein operates within metabolic intermediate metabolism; pimeloyl-CoA biosynthesis; pimeloyl-CoA from pimelate: step 1/1. Its function is as follows. Catalyzes the transformation of pimelate into pimeloyl-CoA with concomitant hydrolysis of ATP to AMP. The sequence is that of 6-carboxyhexanoate--CoA ligase from Alkalihalophilus pseudofirmus (strain ATCC BAA-2126 / JCM 17055 / OF4) (Bacillus pseudofirmus).